The chain runs to 522 residues: Glutathione reductase, mitochondrial (522 aa).

A mitochondrion-targeting transit peptide spans 1 to 43 (MALLPRALSAGAGPSWRRAARAFRGFLLLLPEPAALTRALSRA). FAD is bound by residues Ser-74 and Gly-75. Ser-74 contacts glutathione. Arg-81 provides a ligand contact to glutathione. FAD is bound at residue Glu-94. Lys-97 bears the N6-acetyllysine mark. FAD is bound by residues Thr-101, Cys-102, and Lys-110. Cys-102 and Cys-107 form a disulfide bridge. Tyr-158 provides a ligand contact to glutathione. Ala-174 contributes to the FAD binding site. NADP(+) contacts are provided by Ala-239, Ile-242, Glu-245, Arg-262, Arg-268, and Gly-334. Residue Asp-375 participates in FAD binding. Leu-381 lines the NADP(+) pocket. Position 383 (Thr-383) interacts with FAD. Residue Arg-391 coordinates glutathione. Val-414 lines the NADP(+) pocket. His-511 is an FAD binding site. The Proton acceptor role is filled by His-511.

The protein belongs to the class-I pyridine nucleotide-disulfide oxidoreductase family. As to quaternary structure, homodimer; disulfide-linked. Requires FAD as cofactor.

The protein resides in the mitochondrion. The protein localises to the cytoplasm. It catalyses the reaction 2 glutathione + NADP(+) = glutathione disulfide + NADPH + H(+). In terms of biological role, catalyzes the reduction of glutathione disulfide (GSSG) to reduced glutathione (GSH). Constitutes the major mechanism to maintain a high GSH:GSSG ratio in the cytosol. The polypeptide is Glutathione reductase, mitochondrial (GSR) (Homo sapiens (Human)).